Reading from the N-terminus, the 305-residue chain is Translation initiation factor eIF2B subunit alpha (305 aa).

K35 bears the N6-acetyllysine mark.

Belongs to the eIF-2B alpha/beta/delta subunits family. Component of the translation initiation factor 2B (eIF2B) complex which is a heterodecamer of two sets of five different subunits: alpha, beta, gamma, delta and epsilon. Subunits alpha, beta and delta comprise a regulatory subcomplex and subunits epsilon and gamma comprise a catalytic subcomplex. Within the complex, the hexameric regulatory complex resides at the center, with the two heterodimeric catalytic subcomplexes bound on opposite sides.

It localises to the cytoplasm. Its subcellular location is the cytosol. Activated by the chemical integrated stress response (ISR) inhibitor ISRIB which stimulates guanine nucleotide exchange factor activity for both phosphorylated and unphosphorylated eIF2. In terms of biological role, acts as a component of the translation initiation factor 2B (eIF2B) complex, which catalyzes the exchange of GDP for GTP on eukaryotic initiation factor 2 (eIF2) gamma subunit. Its guanine nucleotide exchange factor activity is repressed when bound to eIF2 complex phosphorylated on the alpha subunit, thereby limiting the amount of methionyl-initiator methionine tRNA available to the ribosome and consequently global translation is repressed. The sequence is that of Translation initiation factor eIF2B subunit alpha (EIF2B1) from Pongo abelii (Sumatran orangutan).